The following is a 422-amino-acid chain: 5'-deoxyadenosine deaminase (422 aa).

Zn(2+)-binding residues include histidine 57 and histidine 59. Substrate is bound by residues glutamate 86 and histidine 178. Histidine 205 is a binding site for Zn(2+). Glutamate 208 and aspartate 294 together coordinate substrate. Aspartate 294 provides a ligand contact to Zn(2+).

This sequence belongs to the metallo-dependent hydrolases superfamily. MTA/SAH deaminase family. As to quaternary structure, homotetramer. Zn(2+) is required as a cofactor.

It carries out the reaction 5'-deoxyadenosine + H2O + H(+) = 5'-deoxyinosine + NH4(+). The catalysed reaction is S-adenosyl-L-homocysteine + H2O + H(+) = S-inosyl-L-homocysteine + NH4(+). The enzyme catalyses S-methyl-5'-thioadenosine + H2O + H(+) = S-methyl-5'-thioinosine + NH4(+). It catalyses the reaction adenosine + H2O + H(+) = inosine + NH4(+). The protein operates within amino-acid biosynthesis; S-adenosyl-L-methionine biosynthesis. Its function is as follows. Catalyzes the deamination of three SAM-derived enzymatic products, namely 5'-deoxyadenosine, S-adenosyl-L-homocysteine, and 5'-methylthioadenosine, to produce the inosine analogs. Can also deaminate adenosine. The preferred substrate for this enzyme is 5'-deoxyadenosine, but all these substrates are efficiently deaminated. Likely functions in a S-adenosyl-L-methionine (SAM) recycling pathway from S-adenosyl-L-homocysteine (SAH) produced from SAM-dependent methylation reactions. May also be involved in the recycling of 5'-deoxyadenosine, whereupon the 5'-deoxyribose moiety of 5'-deoxyinosine is further metabolized to deoxyhexoses used for the biosynthesis of aromatic amino acids in methanogens. This Methanococcus maripaludis (strain C5 / ATCC BAA-1333) protein is 5'-deoxyadenosine deaminase.